A 2242-amino-acid chain; its full sequence is Multifunctional protein CAD (2242 aa).

A GATase (Glutamine amidotransferase) region spans residues 1 to 365 (MATLFLDDGS…CARDVKLGVN (365 aa)). L-glutamine is bound by residues Ser-44, Gly-222, and Gly-224. The Glutamine amidotransferase type-1 domain maps to 177–363 (KIMAVDCGMK…LECARDVKLG (187 aa)). The Nucleophile; for GATase activity role is filled by Cys-252. Positions 253, 256, 294, 296, and 297 each coordinate L-glutamine. Catalysis depends on for GATase activity residues His-336 and Glu-338. The interval 366–397 (LDKTVKGRVISHYSFKNGTENSKTPPGRIQPH) is linker. The CPSase A stretch occupies residues 398–937 (KVLILGSGGL…GEGHDLDFTK (540 aa)). The segment at 398–1462 (KVLILGSGGL…TPPVKTHIDS (1065 aa)) is CPSase (Carbamoyl-phosphate synthase). Arg-518, Arg-558, Gly-564, Gly-565, Lys-595, Glu-602, Gly-628, Ile-629, His-630, Gln-671, and Glu-685 together coordinate ATP. ATP-grasp domains follow at residues 522–714 (VEKM…KLAL) and 1057–1248 (SRML…KVIM). Mg(2+) contacts are provided by Gln-671, Glu-685, and Asn-687. Residues Gln-671, Glu-685, and Asn-687 each contribute to the Mn(2+) site. The tract at residues 938–1462 (PHVMVIGSGV…TPPVKTHIDS (525 aa)) is CPSase B. Residues Arg-1093, Lys-1132, Ile-1134, Glu-1139, Gly-1164, Val-1165, His-1166, Ser-1167, Gln-1207, and Glu-1219 each contribute to the ATP site. Positions 1207, 1219, and 1221 each coordinate Mg(2+). 3 residues coordinate Mn(2+): Gln-1207, Glu-1219, and Asn-1221. An MGS-like domain is found at 1313-1469 (FKIPKKNILL…IDSMSSHKLI (157 aa)). A DHOase (dihydroorotase) region spans residues 1463 to 1796 (MSSHKLIRLP…KGRVRRVVLR (334 aa)). 2 residues coordinate Zn(2+): His-1478 and His-1480. (S)-dihydroorotate-binding residues include Arg-1482 and Asn-1512. 5 residues coordinate Zn(2+): Lys-1563, His-1597, Cys-1620, His-1621, and Glu-1644. Lys-1563 carries the N6-carboxylysine modification. Arg-1668 is a binding site for (S)-dihydroorotate. Asp-1693 is a binding site for Zn(2+). Asp-1693 functions as the For DHOase activity in the catalytic mechanism. (S)-dihydroorotate contacts are provided by His-1697 and Pro-1709. Residues 1797 to 1934 (GEVAYIDGQV…QAVPHPYSLL (138 aa)) form a linker region. A disordered region spans residues 1829–1862 (PTTVKTPEHSKPTQTETVRTRTASPRRLASSGPA). Polar residues predominate over residues 1840-1851 (PTQTETVRTRTA). The ATCase (Aspartate transcarbamylase) stretch occupies residues 1935–2242 (LHPFVGQHIL…ALLATVLGKF (308 aa)). Residues Arg-1992 and Thr-1993 each contribute to the carbamoyl phosphate site. Lys-2020 is an L-aspartate binding site. The carbamoyl phosphate site is built by Arg-2041, His-2069, and Gln-2072. L-aspartate contacts are provided by Arg-2102 and Arg-2163. Positions 2202 and 2203 each coordinate carbamoyl phosphate.

It in the N-terminal section; belongs to the CarA family. This sequence in the 2nd section; belongs to the CarB family. The protein in the 3rd section; belongs to the metallo-dependent hydrolases superfamily. DHOase family. CAD subfamily. In the C-terminal section; belongs to the aspartate/ornithine carbamoyltransferase superfamily. ATCase family. In terms of assembly, homohexamer. The cofactor is Mg(2+). Mn(2+) is required as a cofactor. It depends on Zn(2+) as a cofactor. In terms of tissue distribution, present in the testis but not in the liver.

It localises to the cytoplasm. The protein resides in the nucleus. The catalysed reaction is hydrogencarbonate + L-glutamine + 2 ATP + H2O = carbamoyl phosphate + L-glutamate + 2 ADP + phosphate + 2 H(+). The enzyme catalyses L-glutamine + H2O = L-glutamate + NH4(+). It carries out the reaction hydrogencarbonate + NH4(+) + 2 ATP = carbamoyl phosphate + 2 ADP + phosphate + 2 H(+). It catalyses the reaction carbamoyl phosphate + L-aspartate = N-carbamoyl-L-aspartate + phosphate + H(+). The catalysed reaction is (S)-dihydroorotate + H2O = N-carbamoyl-L-aspartate + H(+). Its pathway is pyrimidine metabolism; UMP biosynthesis via de novo pathway; (S)-dihydroorotate from bicarbonate: step 1/3. It functions in the pathway pyrimidine metabolism; UMP biosynthesis via de novo pathway; (S)-dihydroorotate from bicarbonate: step 2/3. It participates in pyrimidine metabolism; UMP biosynthesis via de novo pathway; (S)-dihydroorotate from bicarbonate: step 3/3. Allosterically regulated and controlled by phosphorylation. 5-phosphoribose 1-diphosphate is an activator while UMP is an inhibitor of the CPSase reaction. Its function is as follows. Multifunctional protein that encodes the first 3 enzymatic activities of the de novo pyrimidine pathway: carbamoylphosphate synthetase (CPSase; EC 6.3.5.5), aspartate transcarbamylase (ATCase; EC 2.1.3.2) and dihydroorotase (DHOase; EC 3.5.2.3). The CPSase-function is accomplished in 2 steps, by a glutamine-dependent amidotransferase activity (GATase) that binds and cleaves glutamine to produce ammonia, followed by an ammonium-dependent carbamoyl phosphate synthetase, which reacts with the ammonia, hydrogencarbonate and ATP to form carbamoyl phosphate. The endogenously produced carbamoyl phosphate is sequestered and channeled to the ATCase active site. ATCase then catalyzes the formation of carbamoyl-L-aspartate from L-aspartate and carbamoyl phosphate. In the last step, DHOase catalyzes the cyclization of carbamoyl aspartate to dihydroorotate. This chain is Multifunctional protein CAD (CAD), found in Squalus acanthias (Spiny dogfish).